We begin with the raw amino-acid sequence, 255 residues long: 3-oxoacyl-[acyl-carrier-protein] reductase MabA (255 aa).

NADP(+)-binding positions include 33-35, Arg-55, 69-70, Gly-98, Tyr-161, Lys-165, Ile-194, and Arg-205; these read RGI and DV. The active-site Proton acceptor is the Tyr-161.

It belongs to the short-chain dehydrogenases/reductases (SDR) family. In terms of assembly, homotetramer.

It is found in the secreted. The protein localises to the cell wall. The catalysed reaction is a (3R)-hydroxyacyl-[ACP] + NADP(+) = a 3-oxoacyl-[ACP] + NADPH + H(+). The protein operates within lipid metabolism; mycolic acid biosynthesis. Its function is as follows. Part of the mycobacterial fatty acid elongation system FAS-II, which is involved in mycolic acid biosynthesis. Catalyzes the NADPH-dependent reduction of beta-ketoacyl derivatives, the second step of the FAS-II elongation cycle. This is 3-oxoacyl-[acyl-carrier-protein] reductase MabA from Mycobacterium avium.